The sequence spans 1181 residues: DNA-directed RNA polymerase subunit beta' (1181 aa).

Zn(2+) is bound by residues C68, C70, C83, and C86. 3 residues coordinate Mg(2+): D457, D459, and D461. Positions 802, 876, 883, and 886 each coordinate Zn(2+).

Belongs to the RNA polymerase beta' chain family. The RNAP catalytic core consists of 2 alpha, 1 beta, 1 beta' and 1 omega subunit. When a sigma factor is associated with the core the holoenzyme is formed, which can initiate transcription. Requires Mg(2+) as cofactor. The cofactor is Zn(2+).

The enzyme catalyses RNA(n) + a ribonucleoside 5'-triphosphate = RNA(n+1) + diphosphate. Functionally, DNA-dependent RNA polymerase catalyzes the transcription of DNA into RNA using the four ribonucleoside triphosphates as substrates. The sequence is that of DNA-directed RNA polymerase subunit beta' from Syntrophomonas wolfei subsp. wolfei (strain DSM 2245B / Goettingen).